The sequence spans 144 residues: Transcription antitermination protein NusB (144 aa).

The protein belongs to the NusB family.

Functionally, involved in transcription antitermination. Required for transcription of ribosomal RNA (rRNA) genes. Binds specifically to the boxA antiterminator sequence of the ribosomal RNA (rrn) operons. This chain is Transcription antitermination protein NusB, found in Streptomyces avermitilis (strain ATCC 31267 / DSM 46492 / JCM 5070 / NBRC 14893 / NCIMB 12804 / NRRL 8165 / MA-4680).